Reading from the N-terminus, the 86-residue chain is Large ribosomal subunit protein bL27 (86 aa).

Residues 1 to 10 (MAQKKGGGST) show a composition bias toward gly residues. A disordered region spans residues 1-20 (MAQKKGGGSTRNGRDSESKR).

Belongs to the bacterial ribosomal protein bL27 family.

In Polynucleobacter necessarius subsp. necessarius (strain STIR1), this protein is Large ribosomal subunit protein bL27.